The primary structure comprises 99 residues: Protein S100-Z (99 aa).

2 consecutive EF-hand domains span residues 13–48 and 50–85; these read ITVF…FLMS and KDPM…LTVA. Ca(2+) is bound by residues Ser-20, Glu-23, Asp-25, Lys-28, Glu-33, Asp-63, Asn-65, Asp-67, Glu-69, and Glu-74.

Belongs to the S-100 family. As to quaternary structure, homodimer. Homodimers may assemble into larger stable oligomers. In terms of tissue distribution, in larva at 5 days post-fertilization, shows very restricted expression only in a few large cells of the olfactory placode. More widely expressed in the adult. Expressed at higher levels in gut than in spleen, head kidney and gill.

The sequence is that of Protein S100-Z from Danio rerio (Zebrafish).